Consider the following 869-residue polypeptide: Programmed cell death 6-interacting protein (869 aa).

Position 2 is an N-acetylalanine (Ala2). One can recognise a BRO1 domain in the interval 3-392 (SFIWVQLKKT…AQMREATTLA (390 aa)). Positions 176–503 (TVDISPDTVG…KFRAVLDKAV (328 aa)) are interaction with CHMP4A, CHMP4B and CHMP4C. An N6-acetyllysine modification is found at Lys215. Residues 383–869 (AQMREATTLA…PPQQSYYPQQ (487 aa)) form an interaction with SDCBP region. Thr479 is subject to Phosphothreonine. Ser481 is modified (phosphoserine). The tract at residues 503–869 (VQADGQVKER…PPQQSYYPQQ (367 aa)) is self-association. Disordered regions lie at residues 715 to 808 (REPS…PTYP) and 838 to 869 (YHQS…YPQQ). Residues 717–720 (PSAP) are interaction with TSG101. At Ser730 the chain carries Phosphoserine. Residues 739 to 763 (PPTPAPRTMPPAKPQPPARPPPPVL) show a composition bias toward pro residues. Thr741 is modified (phosphothreonine). Residue Arg745 is modified to Omega-N-methylarginine. Positions 764–787 (PANRVPPASAAAAPAGVGTASAAP) are enriched in low complexity. Composition is skewed to pro residues over residues 788–808 (PQTP…PTYP) and 845–861 (APYP…PQPP). An interaction with CEP55 region spans residues 798–807 (QAQGPPYPTY).

As to quaternary structure, self-associates. Interacts with SH3KBP1. Interacts with PDCD6 in a calcium-dependent manner. Interacts with TSG101 in a calcium-dependent manner; PDCD6IP homooligomerization may be required for TSG101-binding. Interacts with SGSM3. Directly interacts with CHMP4A, CHMP4B and CHMP4C. Directly interacts with CEP55 in a 1:2 stoechiometry; this interaction is required for PDCD6IP targeting to the midbody. May interact with PDGFRB. Interacts with SH3GL1 and SH3GL2/endophilin-1. Forms a complex with SDCBP and SDC2. Found in a complex with F-actin, TJP1/ZO-1 and PARD3. Interacts with CD2AP. Interacts with ARRDC1. Interacts (via BRO1 domain) with the ATG12-ATG3 conjugat; this interaction is bridged by ATG12 and promotes multiple PDCD6IP-mediated functions such as endolysosomal trafficking, macroautophagy and exosome biogenesis. Post-translationally, may be phosphorylated on tyrosine residues by activated PDGFRB. Ubiquitously expressed. High expression in choroid plexus and low expression in cerebral cortex (at protein level).

Its subcellular location is the cytoplasm. The protein localises to the cytosol. The protein resides in the melanosome. It localises to the cytoskeleton. It is found in the microtubule organizing center. Its subcellular location is the centrosome. The protein localises to the secreted. The protein resides in the extracellular exosome. It localises to the cell junction. It is found in the tight junction. Its subcellular location is the midbody. The protein localises to the midbody ring. Multifunctional protein involved in endocytosis, multivesicular body biogenesis, membrane repair, cytokinesis, apoptosis and maintenance of tight junction integrity. Class E VPS protein involved in concentration and sorting of cargo proteins of the multivesicular body (MVB) for incorporation into intralumenal vesicles (ILVs) that are generated by invagination and scission from the limiting membrane of the endosome. Binds to the phospholipid lysobisphosphatidic acid (LBPA) which is abundant in MVBs internal membranes. The MVB pathway requires the sequential function of ESCRT-O, -I,-II and -III complexes. The ESCRT machinery also functions in topologically equivalent membrane fission events, such as the terminal stages of cytokinesis. Adapter for a subset of ESCRT-III proteins, such as CHMP4, to function at distinct membranes. Required for completion of cytokinesis. May play a role in the regulation of both apoptosis and cell proliferation. Regulates exosome biogenesis in concert with SDC1/4 and SDCBP. By interacting with F-actin, PARD3 and TJP1 secures the proper assembly and positioning of actomyosin-tight junction complex at the apical sides of adjacent epithelial cells that defines a spatial membrane domain essential for the maintenance of epithelial cell polarity and barrier. In Mus musculus (Mouse), this protein is Programmed cell death 6-interacting protein.